A 156-amino-acid chain; its full sequence is Small ribosomal subunit protein uS7 (156 aa).

Belongs to the universal ribosomal protein uS7 family. Part of the 30S ribosomal subunit. Contacts proteins S9 and S11.

Functionally, one of the primary rRNA binding proteins, it binds directly to 16S rRNA where it nucleates assembly of the head domain of the 30S subunit. Is located at the subunit interface close to the decoding center, probably blocks exit of the E-site tRNA. The protein is Small ribosomal subunit protein uS7 of Bacillus licheniformis (strain ATCC 14580 / DSM 13 / JCM 2505 / CCUG 7422 / NBRC 12200 / NCIMB 9375 / NCTC 10341 / NRRL NRS-1264 / Gibson 46).